The following is a 137-amino-acid chain: MMQPKRTKFRKQFKGRIHGNSKGGTDLNFGAFGLKALEPERVTARQIEAARRAITRHMKRAGRVWIRIFPDLPVTSKPTEVRMGKGKGSVDYWACRVAPGRVMFELDGVPEDVAREALRLGAAKLPIKTRFIQRIAE.

The protein belongs to the universal ribosomal protein uL16 family. In terms of assembly, part of the 50S ribosomal subunit.

Its function is as follows. Binds 23S rRNA and is also seen to make contacts with the A and possibly P site tRNAs. This chain is Large ribosomal subunit protein uL16, found in Brucella abortus (strain S19).